We begin with the raw amino-acid sequence, 337 residues long: Anthranilate phosphoribosyltransferase (337 aa).

5-phospho-alpha-D-ribose 1-diphosphate-binding positions include Gly-81, 84–85, Ser-89, 91–94, 109–117, and Ala-121; these read GD, NVST, and KHGNRALSS. Gly-81 contacts anthranilate. Residue Ser-93 coordinates Mg(2+). Asn-112 contacts anthranilate. Arg-167 contacts anthranilate. Mg(2+) contacts are provided by Asp-226 and Glu-227.

This sequence belongs to the anthranilate phosphoribosyltransferase family. Homodimer. It depends on Mg(2+) as a cofactor.

It carries out the reaction N-(5-phospho-beta-D-ribosyl)anthranilate + diphosphate = 5-phospho-alpha-D-ribose 1-diphosphate + anthranilate. Its pathway is amino-acid biosynthesis; L-tryptophan biosynthesis; L-tryptophan from chorismate: step 2/5. Its function is as follows. Catalyzes the transfer of the phosphoribosyl group of 5-phosphorylribose-1-pyrophosphate (PRPP) to anthranilate to yield N-(5'-phosphoribosyl)-anthranilate (PRA). The polypeptide is Anthranilate phosphoribosyltransferase (Bradyrhizobium sp. (strain ORS 278)).